We begin with the raw amino-acid sequence, 843 residues long: NADH-quinone oxidoreductase subunit G (843 aa).

Positions Asp-20–Ser-98 constitute a 2Fe-2S ferredoxin-type domain. Cys-54, Cys-65, Cys-68, and Cys-82 together coordinate [2Fe-2S] cluster. Residues Val-100–Gly-139 form the 4Fe-4S His(Cys)3-ligated-type domain. [4Fe-4S] cluster-binding residues include His-116, Cys-120, Cys-123, Cys-129, Cys-169, Cys-172, Cys-175, Cys-219, Cys-245, Cys-248, Cys-252, and Cys-280. Residues Leu-238–Asp-294 enclose the 4Fe-4S Mo/W bis-MGD-type domain.

Belongs to the complex I 75 kDa subunit family. It depends on [2Fe-2S] cluster as a cofactor. Requires [4Fe-4S] cluster as cofactor.

It catalyses the reaction a quinone + NADH + 5 H(+)(in) = a quinol + NAD(+) + 4 H(+)(out). Its function is as follows. NDH-1 shuttles electrons from NADH, via FMN and iron-sulfur (Fe-S) centers, to quinones in the respiratory chain. Couples the redox reaction to proton translocation (for every two electrons transferred, four hydrogen ions are translocated across the cytoplasmic membrane), and thus conserves the redox energy in a proton gradient. This Streptomyces coelicolor (strain ATCC BAA-471 / A3(2) / M145) protein is NADH-quinone oxidoreductase subunit G (nuoG).